The primary structure comprises 175 residues: Inorganic pyrophosphatase (175 aa).

3 residues coordinate substrate: K30, R44, and Y56. Residues D66, D71, and D103 each contribute to the Mg(2+) site. Y142 is a binding site for substrate.

This sequence belongs to the PPase family. In terms of assembly, homohexamer. Mg(2+) is required as a cofactor.

It localises to the cytoplasm. It catalyses the reaction diphosphate + H2O = 2 phosphate + H(+). Its function is as follows. Catalyzes the hydrolysis of inorganic pyrophosphate (PPi) forming two phosphate ions. This Haemophilus ducreyi (strain 35000HP / ATCC 700724) protein is Inorganic pyrophosphatase.